Consider the following 81-residue polypeptide: DNA-directed RNA polymerase subunit Rpo6 (81 aa).

It belongs to the archaeal Rpo6/eukaryotic RPB6 RNA polymerase subunit family. In terms of assembly, part of the RNA polymerase complex.

The protein localises to the cytoplasm. The catalysed reaction is RNA(n) + a ribonucleoside 5'-triphosphate = RNA(n+1) + diphosphate. DNA-dependent RNA polymerase (RNAP) catalyzes the transcription of DNA into RNA using the four ribonucleoside triphosphates as substrates. The sequence is that of DNA-directed RNA polymerase subunit Rpo6 from Thermofilum pendens (strain DSM 2475 / Hrk 5).